The following is a 396-amino-acid chain: Glyceraldehyde-3-phosphate dehydrogenase GAPA1, chloroplastic (396 aa).

The transit peptide at 1–60 directs the protein to the chloroplast; it reads MASVTFSVPKGFTEFSGLRSSSASLPFGKKLSSDEFVSIVSFQTSAMGSSGGYRKGVTEA. Residues 71 to 72, aspartate 95, and arginine 140 contribute to the NADP(+) site; that span reads RI. Residues 212-214, threonine 243, arginine 258, 271-272, and arginine 294 contribute to the D-glyceraldehyde 3-phosphate site; these read SCT and TG. Cysteine 213 serves as the catalytic Nucleophile. An NADP(+)-binding site is contributed by asparagine 376.

Belongs to the glyceraldehyde-3-phosphate dehydrogenase family. Tetramer of either four A chains (GAPDH 2) or two A and two B chains (GAPDH 1). As to expression, expressed in leaves and stems.

The protein localises to the plastid. It is found in the chloroplast membrane. Its subcellular location is the chloroplast stroma. The enzyme catalyses D-glyceraldehyde 3-phosphate + phosphate + NADP(+) = (2R)-3-phospho-glyceroyl phosphate + NADPH + H(+). Its pathway is carbohydrate biosynthesis; Calvin cycle. In terms of biological role, involved in the photosynthetic reductive pentose phosphate pathway (Calvin-Benson cycle). Catalyzes the reduction of 1,3-diphosphoglycerate by NADPH. This is Glyceraldehyde-3-phosphate dehydrogenase GAPA1, chloroplastic (GAPA1) from Arabidopsis thaliana (Mouse-ear cress).